Reading from the N-terminus, the 102-residue chain is Large ribosomal subunit protein uL24 (102 aa).

This sequence belongs to the universal ribosomal protein uL24 family. As to quaternary structure, part of the 50S ribosomal subunit.

One of two assembly initiator proteins, it binds directly to the 5'-end of the 23S rRNA, where it nucleates assembly of the 50S subunit. Functionally, one of the proteins that surrounds the polypeptide exit tunnel on the outside of the subunit. The sequence is that of Large ribosomal subunit protein uL24 from Agrobacterium fabrum (strain C58 / ATCC 33970) (Agrobacterium tumefaciens (strain C58)).